The chain runs to 556 residues: Valencene synthase (556 aa).

The span at 1-12 (MSTQVSASSLAQ) shows a compositional bias: polar residues. Residues 1-24 (MSTQVSASSLAQIPQPKNRPVANF) form a disordered region. Residues Asp310, Asp314, and Glu462 each coordinate Mg(2+). Positions 310 to 314 (DDIHD) match the DDXXD motif motif.

This sequence belongs to the terpene synthase family. Tpsa subfamily. Mg(2+) serves as cofactor. Expressed in flowers and anthers. Detected inside the pollen grains, but not in stems, leaves, tendrils, roots, seeds, pistils or caps.

Its subcellular location is the cytoplasm. It carries out the reaction (2E,6E)-farnesyl diphosphate = (+)-valencene + diphosphate. The enzyme catalyses (2E,6E)-farnesyl diphosphate = (-)-7-epi-alpha-selinene + diphosphate. The protein operates within secondary metabolite biosynthesis; terpenoid biosynthesis. Functionally, involved in the biosynthesis of valencene, a major volatile emitted from flowers of grapevine. Can use farnesyl diphosphate as substrate, but not geranyl diphosphate or geranylgeranyl diphosphate. Produces mainly (+)-valencene and (-)-7-epi-alpha-selinene along with five minor products. The sequence is that of Valencene synthase (ValCS) from Vitis vinifera (Grape).